A 465-amino-acid polypeptide reads, in one-letter code: Cyclin-A1 (465 aa).

It belongs to the cyclin family. Cyclin AB subfamily. In terms of assembly, interacts with the CDK2 and the CDC2 protein kinases to form a serine/threonine kinase holoenzyme complex. The cyclin subunit imparts substrate specificity to the complex. Does not bind CDK4 and CDK5 (in vitro). The cyclin A1-CDK2 complex interacts with transcription factor E2F-1 and RB proteins. Found in a complex with CDK2, CABLES1 and CCNE1. Interacts with INCA1. Interacts with KLHDC9. Polyubiquitinated via 'Lys-11'-linked ubiquitin by the anaphase-promoting complex (APC/C), leading to its degradation by the proteasome. Deubiquitinated and stabilized by USP37 enables entry into S phase. Ubiquitinated during the G1 phase by the SCF(FBXO31) complex, leading to its proteasomal degradation. Very high levels in testis and very low levels in brain. Also found in myeloid leukemia cell lines.

The protein localises to the nucleus. Functionally, may be involved in the control of the cell cycle at the G1/S (start) and G2/M (mitosis) transitions. May primarily function in the control of the germline meiotic cell cycle and additionally in the control of mitotic cell cycle in some somatic cells. This is Cyclin-A1 (CCNA1) from Homo sapiens (Human).